Reading from the N-terminus, the 384-residue chain is 8-amino-7-oxononanoate synthase (384 aa).

A substrate-binding site is contributed by Arg21. 108–109 (GF) contacts pyridoxal 5'-phosphate. Residue His133 participates in substrate binding. Residues Ser179, His207, and Thr233 each coordinate pyridoxal 5'-phosphate. Position 236 is an N6-(pyridoxal phosphate)lysine (Lys236). Substrate is bound at residue Thr352.

This sequence belongs to the class-II pyridoxal-phosphate-dependent aminotransferase family. BioF subfamily. In terms of assembly, homodimer. Pyridoxal 5'-phosphate is required as a cofactor.

The catalysed reaction is 6-carboxyhexanoyl-[ACP] + L-alanine + H(+) = (8S)-8-amino-7-oxononanoate + holo-[ACP] + CO2. It participates in cofactor biosynthesis; biotin biosynthesis. Functionally, catalyzes the decarboxylative condensation of pimeloyl-[acyl-carrier protein] and L-alanine to produce 8-amino-7-oxononanoate (AON), [acyl-carrier protein], and carbon dioxide. This Escherichia coli O17:K52:H18 (strain UMN026 / ExPEC) protein is 8-amino-7-oxononanoate synthase.